A 263-amino-acid polypeptide reads, in one-letter code: ATP synthase subunit delta (263 aa).

The protein belongs to the ATPase delta chain family. In terms of assembly, F-type ATPases have 2 components, F(1) - the catalytic core - and F(0) - the membrane proton channel. F(1) has five subunits: alpha(3), beta(3), gamma(1), delta(1), epsilon(1). F(0) has three main subunits: a(1), b(2) and c(10-14). The alpha and beta chains form an alternating ring which encloses part of the gamma chain. F(1) is attached to F(0) by a central stalk formed by the gamma and epsilon chains, while a peripheral stalk is formed by the delta and b chains.

The protein localises to the cell membrane. Its function is as follows. F(1)F(0) ATP synthase produces ATP from ADP in the presence of a proton or sodium gradient. F-type ATPases consist of two structural domains, F(1) containing the extramembraneous catalytic core and F(0) containing the membrane proton channel, linked together by a central stalk and a peripheral stalk. During catalysis, ATP synthesis in the catalytic domain of F(1) is coupled via a rotary mechanism of the central stalk subunits to proton translocation. This protein is part of the stalk that links CF(0) to CF(1). It either transmits conformational changes from CF(0) to CF(1) or is implicated in proton conduction. In Leifsonia xyli subsp. xyli (strain CTCB07), this protein is ATP synthase subunit delta.